Here is a 79-residue protein sequence, read N- to C-terminus: Dicentracin (79 aa).

The N-terminal stretch at M1 to A22 is a signal peptide. Glycine amide is present on G44. Residues A47–D79 constitute a propeptide that is removed on maturation. The disordered stretch occupies residues Q48–Q67.

It belongs to the pleurocidin family.

It localises to the secreted. This is Dicentracin from Dicentrarchus labrax (European seabass).